The chain runs to 213 residues: Cytochrome c biogenesis ATP-binding export protein CcmA (213 aa).

The ABC transporter domain maps to 8-213; that stretch reads LQATALTCER…RDIDLGQWAA (206 aa). 40–47 contacts ATP; the sequence is GPNGSGKT.

This sequence belongs to the ABC transporter superfamily. CcmA exporter (TC 3.A.1.107) family. As to quaternary structure, the complex is composed of two ATP-binding proteins (CcmA) and two transmembrane proteins (CcmB).

Its subcellular location is the cell inner membrane. The enzyme catalyses heme b(in) + ATP + H2O = heme b(out) + ADP + phosphate + H(+). In terms of biological role, part of the ABC transporter complex CcmAB involved in the biogenesis of c-type cytochromes; once thought to export heme, this seems not to be the case, but its exact role is uncertain. Responsible for energy coupling to the transport system. The chain is Cytochrome c biogenesis ATP-binding export protein CcmA from Pseudomonas savastanoi pv. phaseolicola (strain 1448A / Race 6) (Pseudomonas syringae pv. phaseolicola (strain 1448A / Race 6)).